Here is a 215-residue protein sequence, read N- to C-terminus: ATP-dependent Clp protease proteolytic subunit (215 aa).

Ser111 acts as the Nucleophile in catalysis. The active site involves His136.

This sequence belongs to the peptidase S14 family. As to quaternary structure, fourteen ClpP subunits assemble into 2 heptameric rings which stack back to back to give a disk-like structure with a central cavity, resembling the structure of eukaryotic proteasomes.

The protein localises to the cytoplasm. The enzyme catalyses Hydrolysis of proteins to small peptides in the presence of ATP and magnesium. alpha-casein is the usual test substrate. In the absence of ATP, only oligopeptides shorter than five residues are hydrolyzed (such as succinyl-Leu-Tyr-|-NHMec, and Leu-Tyr-Leu-|-Tyr-Trp, in which cleavage of the -Tyr-|-Leu- and -Tyr-|-Trp bonds also occurs).. Functionally, cleaves peptides in various proteins in a process that requires ATP hydrolysis. Has a chymotrypsin-like activity. Plays a major role in the degradation of misfolded proteins. In Hamiltonella defensa subsp. Acyrthosiphon pisum (strain 5AT), this protein is ATP-dependent Clp protease proteolytic subunit.